Reading from the N-terminus, the 103-residue chain is Small ribosomal subunit protein uS14c (103 aa).

Residues 34–56 (KVSPLSLSEKTKMREKLQSLPRN) are disordered.

Belongs to the universal ribosomal protein uS14 family. As to quaternary structure, part of the 30S ribosomal subunit.

The protein resides in the plastid. The protein localises to the chloroplast. In terms of biological role, binds 16S rRNA, required for the assembly of 30S particles. This chain is Small ribosomal subunit protein uS14c, found in Triticum aestivum (Wheat).